Reading from the N-terminus, the 315-residue chain is MNPIQHILDTYPLIVLDGAMATELERKGCNLNDSLWSAKILMEEPELIKQVHTDYFAAGADCAITASYQSTFEGFAARGLSEAEARRLIELSVSIAAEARDEFWSLEENRLNRPKPIIAASIGPYGAYLADGSEYRGNYAISEDELIEFHRPRMKALIEAGADVLACETIPCLTEAKAIVRLLKEFPETYAWISFSAKDGLHISDGTPAADCASWLDEHRQIAALGINCTPLQHIPSLIEELKKNTSKPIIVYPNSGEQYDPETKTWNGAACAESYGASARTWHEKGARLIGGCCRTKPENIQEIAAWARSLKTT.

The Hcy-binding domain maps to 2 to 309 (NPIQHILDTY…ENIQEIAAWA (308 aa)). Zn(2+) contacts are provided by Cys229, Cys294, and Cys295.

Zn(2+) serves as cofactor.

The enzyme catalyses S-methyl-L-methionine + L-homocysteine = 2 L-methionine + H(+). This Bacillus subtilis (strain 168) protein is Homocysteine S-methyltransferase YbgG (ybgG).